The chain runs to 486 residues: Aspartyl/glutamyl-tRNA(Asn/Gln) amidotransferase subunit B (486 aa).

This sequence belongs to the GatB/GatE family. GatB subfamily. Heterotrimer of A, B and C subunits.

The catalysed reaction is L-glutamyl-tRNA(Gln) + L-glutamine + ATP + H2O = L-glutaminyl-tRNA(Gln) + L-glutamate + ADP + phosphate + H(+). It catalyses the reaction L-aspartyl-tRNA(Asn) + L-glutamine + ATP + H2O = L-asparaginyl-tRNA(Asn) + L-glutamate + ADP + phosphate + 2 H(+). Its function is as follows. Allows the formation of correctly charged Asn-tRNA(Asn) or Gln-tRNA(Gln) through the transamidation of misacylated Asp-tRNA(Asn) or Glu-tRNA(Gln) in organisms which lack either or both of asparaginyl-tRNA or glutaminyl-tRNA synthetases. The reaction takes place in the presence of glutamine and ATP through an activated phospho-Asp-tRNA(Asn) or phospho-Glu-tRNA(Gln). This Azoarcus sp. (strain BH72) protein is Aspartyl/glutamyl-tRNA(Asn/Gln) amidotransferase subunit B.